Consider the following 322-residue polypeptide: Pantothenate kinase (322 aa).

100–107 (GSVAVGKS) provides a ligand contact to ATP.

This sequence belongs to the prokaryotic pantothenate kinase family.

It is found in the cytoplasm. The catalysed reaction is (R)-pantothenate + ATP = (R)-4'-phosphopantothenate + ADP + H(+). It functions in the pathway cofactor biosynthesis; coenzyme A biosynthesis; CoA from (R)-pantothenate: step 1/5. The polypeptide is Pantothenate kinase (Brucella canis (strain ATCC 23365 / NCTC 10854 / RM-666)).